The chain runs to 140 residues: ISDra2 transposase TnpA (140 aa).

Mg(2+) is bound by residues H67 and H69. Residues 127–133 are mobile alpha helix; sequence AQIQKYI. The active-site Nucleophile is Y132. Residue Q136 coordinates Mg(2+).

Belongs to the transposase 17 family. In terms of assembly, homodimer. Mg(2+) serves as cofactor.

Its activity is regulated as follows. Both the excision and insertion steps are inhibited by TnpB. Functionally, a transposase that is part of insertion sequence (IS) element ISDra2, it is necessary and sufficient for both transposon excision and insertion of ISDra2. This protein alone can be provided in trans and allows transposition of an empty IS element (tnpA or tnpA-tnpB replaced by a selectable marker). ISDra2 binds subterminal imperfect palindromes at the left (LE) and right (RE) ends of the element and cleaves only the 'top strand' which is circularized and subsequently reinserted into the DNA target. This is called a 'peel and paste' mechanism and increases the copy number of the IS. Transposition is linked to DNA replication in the absence of irradiation, with maximal activity when the 'top strand' is on the replication lagging strand, and occurs preferentially on the lagging strand. The IS element inserts 3' of the target sequence 5'-TTGAT-3'; target duplication has not been observed. The polypeptide is ISDra2 transposase TnpA (Deinococcus radiodurans (strain ATCC 13939 / DSM 20539 / JCM 16871 / CCUG 27074 / LMG 4051 / NBRC 15346 / NCIMB 9279 / VKM B-1422 / R1)).